Reading from the N-terminus, the 196-residue chain is Nucleoside triphosphate pyrophosphatase (196 aa).

Aspartate 73 (proton acceptor) is an active-site residue.

It belongs to the Maf family. The cofactor is a divalent metal cation.

It is found in the cytoplasm. The catalysed reaction is a ribonucleoside 5'-triphosphate + H2O = a ribonucleoside 5'-phosphate + diphosphate + H(+). It catalyses the reaction a 2'-deoxyribonucleoside 5'-triphosphate + H2O = a 2'-deoxyribonucleoside 5'-phosphate + diphosphate + H(+). Its function is as follows. Nucleoside triphosphate pyrophosphatase. May have a dual role in cell division arrest and in preventing the incorporation of modified nucleotides into cellular nucleic acids. The protein is Nucleoside triphosphate pyrophosphatase of Chlamydia pneumoniae (Chlamydophila pneumoniae).